A 498-amino-acid chain; its full sequence is Pup deamidase/depupylase (498 aa).

6-10 (GTEVE) lines the ATP pocket. Mg(2+)-binding residues include glutamate 8 and tyrosine 93. Aspartate 95 (proton acceptor) is an active-site residue. Residue glutamate 100 participates in Mg(2+) binding. 102-103 (SA) lines the ATP pocket. Histidine 156 provides a ligand contact to Mg(2+). 2 residues coordinate ATP: asparagine 158 and arginine 240. Histidine 242 provides a ligand contact to Mg(2+).

It belongs to the Pup ligase/Pup deamidase family. Pup deamidase subfamily. ATP is required as a cofactor.

The catalysed reaction is [prokaryotic ubiquitin-like protein]-C-terminal-L-glutamine + H2O = [prokaryotic ubiquitin-like protein]-C-terminal-L-glutamate + NH4(+). The protein operates within protein degradation; proteasomal Pup-dependent pathway. Specifically catalyzes the deamidation of the C-terminal glutamine of the prokaryotic ubiquitin-like protein Pup to glutamate, thereby rendering Pup competent for conjugation. Probably also displays depupylase (DPUP) activity, removing conjugated Pup from target proteins; thus may be involved in the recycling of Pup and may function similarly to deubiquitinases (DUBs) in eukaryotes to prevent or promote proteasomal degradation of certain proteins. The protein is Pup deamidase/depupylase (dop) of Mycolicibacterium smegmatis (strain ATCC 700084 / mc(2)155) (Mycobacterium smegmatis).